The following is a 232-amino-acid chain: Ribonuclease 3 (232 aa).

The region spanning 2–135 (IKALEDDLSQ…FIGALYLDQG (134 aa)) is the RNase III domain. Glu48 is a binding site for Mg(2+). Residue Asp52 is part of the active site. Mg(2+) contacts are provided by Asp121 and Glu124. The active site involves Glu124. Positions 161-230 (DHKSELQELL…ANQALQLLRR (70 aa)) constitute a DRBM domain.

The protein belongs to the ribonuclease III family. As to quaternary structure, homodimer. It depends on Mg(2+) as a cofactor.

The protein localises to the cytoplasm. The catalysed reaction is Endonucleolytic cleavage to 5'-phosphomonoester.. Functionally, digests double-stranded RNA. Involved in the processing of primary rRNA transcript to yield the immediate precursors to the large and small rRNAs (23S and 16S). Processes some mRNAs, and tRNAs when they are encoded in the rRNA operon. Processes pre-crRNA and tracrRNA of type II CRISPR loci if present in the organism. The protein is Ribonuclease 3 of Pediococcus pentosaceus (strain ATCC 25745 / CCUG 21536 / LMG 10740 / 183-1w).